The following is a 112-amino-acid chain: Iron-sulfur cluster assembly protein CyaY (112 aa).

The protein belongs to the frataxin family.

Functionally, involved in iron-sulfur (Fe-S) cluster assembly. May act as a regulator of Fe-S biogenesis. This is Iron-sulfur cluster assembly protein CyaY from Delftia acidovorans (strain DSM 14801 / SPH-1).